The primary structure comprises 246 residues: UDP-N-acetyl-D-mannosaminuronic acid transferase (246 aa).

The protein belongs to the glycosyltransferase 26 family.

The enzyme catalyses UDP-N-acetyl-alpha-D-mannosaminouronate + N-acetyl-alpha-D-glucosaminyl-di-trans,octa-cis-undecaprenyl diphosphate = beta-D-ManNAcA-(1-&gt;4)-alpha-D-GlcNAc-di-trans,octa-cis-undecaprenyl diphosphate + UDP + H(+). It functions in the pathway bacterial outer membrane biogenesis; enterobacterial common antigen biosynthesis. In terms of biological role, catalyzes the synthesis of Und-PP-GlcNAc-ManNAcA (Lipid II), the second lipid-linked intermediate involved in enterobacterial common antigen (ECA) synthesis. In Salmonella arizonae (strain ATCC BAA-731 / CDC346-86 / RSK2980), this protein is UDP-N-acetyl-D-mannosaminuronic acid transferase.